The sequence spans 435 residues: Serine--tRNA ligase (435 aa).

Thr-242–Glu-244 is an L-serine binding site. Residue Arg-273–Glu-275 participates in ATP binding. Glu-296 lines the L-serine pocket. An ATP-binding site is contributed by Glu-360–Ser-363. Residue Ser-396 coordinates L-serine.

This sequence belongs to the class-II aminoacyl-tRNA synthetase family. Type-1 seryl-tRNA synthetase subfamily. In terms of assembly, homodimer. The tRNA molecule binds across the dimer.

The protein resides in the cytoplasm. The catalysed reaction is tRNA(Ser) + L-serine + ATP = L-seryl-tRNA(Ser) + AMP + diphosphate + H(+). It catalyses the reaction tRNA(Sec) + L-serine + ATP = L-seryl-tRNA(Sec) + AMP + diphosphate + H(+). Its pathway is aminoacyl-tRNA biosynthesis; selenocysteinyl-tRNA(Sec) biosynthesis; L-seryl-tRNA(Sec) from L-serine and tRNA(Sec): step 1/1. Catalyzes the attachment of serine to tRNA(Ser). Is also able to aminoacylate tRNA(Sec) with serine, to form the misacylated tRNA L-seryl-tRNA(Sec), which will be further converted into selenocysteinyl-tRNA(Sec). The protein is Serine--tRNA ligase of Vibrio parahaemolyticus serotype O3:K6 (strain RIMD 2210633).